The primary structure comprises 460 residues: ATP synthase subunit beta (460 aa).

Position 150–157 (150–157 (GGAGVGKT)) interacts with ATP.

This sequence belongs to the ATPase alpha/beta chains family. As to quaternary structure, F-type ATPases have 2 components, CF(1) - the catalytic core - and CF(0) - the membrane proton channel. CF(1) has five subunits: alpha(3), beta(3), gamma(1), delta(1), epsilon(1). CF(0) has three main subunits: a(1), b(2) and c(9-12). The alpha and beta chains form an alternating ring which encloses part of the gamma chain. CF(1) is attached to CF(0) by a central stalk formed by the gamma and epsilon chains, while a peripheral stalk is formed by the delta and b chains.

It localises to the cell inner membrane. It catalyses the reaction ATP + H2O + 4 H(+)(in) = ADP + phosphate + 5 H(+)(out). In terms of biological role, produces ATP from ADP in the presence of a proton gradient across the membrane. The catalytic sites are hosted primarily by the beta subunits. The protein is ATP synthase subunit beta of Pectobacterium carotovorum subsp. carotovorum (strain PC1).